A 168-amino-acid polypeptide reads, in one-letter code: Phosphopantetheine adenylyltransferase (168 aa).

S9 is a substrate binding site. Residues S9–F10 and H17 contribute to the ATP site. Positions 41, 73, and 87 each coordinate substrate. ATP-binding positions include G88–R90, E98, and Y123–S129.

It belongs to the bacterial CoaD family. As to quaternary structure, homohexamer. Mg(2+) serves as cofactor.

It localises to the cytoplasm. It catalyses the reaction (R)-4'-phosphopantetheine + ATP + H(+) = 3'-dephospho-CoA + diphosphate. It functions in the pathway cofactor biosynthesis; coenzyme A biosynthesis; CoA from (R)-pantothenate: step 4/5. Functionally, reversibly transfers an adenylyl group from ATP to 4'-phosphopantetheine, yielding dephospho-CoA (dPCoA) and pyrophosphate. This is Phosphopantetheine adenylyltransferase from Heliobacterium modesticaldum (strain ATCC 51547 / Ice1).